Reading from the N-terminus, the 655-residue chain is MAAGVAAWLPFARAAAIGWMPVANCPMPLAPADKNKRQDELIVLNVSGRRFQTWRTTLERYPDTLLGSTEKEFFFNEDTKEYFFDRDPEVFRCVLNFYRTGKLHYPRYECISAYDDELAFYGILPEIIGDCCYEEYKDRKRENAERLMDDNDSENNQESMPSLSFRQTMWRAFENPHTSTLALVFYYVTGFFIAVSVITNVVETVPCGTVPGSKELPCGERYSVAFFCLDTACVMIFTVEYLLRLFAAPSRYRFIRSVMSIIDVVAIMPYYIGLVMTNNEDVSGAFVTLRVFRVFRIFKFSRHSQGLRILGYTLKSCASELGFLLFSLTMAIIIFATVMFYAEKGSSASKFTSIPASFWYTIVTMTTLGYGDMVPKTIAGKIFGSICSLSGVLVIALPVPVIVSNFSRIYHQNQRADKRRAQKKARLARIRVAKTGSSNAYLHSKRNGLLNEALELTGTPEEEQMGKTTSLIESQHHHLLHCLEKTTGLSYLVDDPLLSVRTSTIKNHEFIDEQMFEQNCMESSMQNYPSTRSPSLSSHSGLTTTCCSRRSKKTTHLPNSNLPATRLRSMQELSTLHIQGSEQPSLTTSRSSLNLKADDGLRPNCKTSQITTAIISIPTPPALTPEGESRPPPASPGPNTNIPSITSNVVKVSAL.

Residues 1-182 (MAAGVAAWLP…FENPHTSTLA (182 aa)) are Cytoplasmic-facing. Residues 6–21 (AAWLPFARAAAIGWMP) form an interaction with KCNIP1 and KCNIP2 region. The interaction with KCNIP1 stretch occupies residues 70-78 (EKEFFFNED). Residues histidine 104, cysteine 110, cysteine 131, and cysteine 132 each coordinate Zn(2+). Serine 153 is subject to Phosphoserine. Residues 183–204 (LVFYYVTGFFIAVSVITNVVET) traverse the membrane as a helical segment. The Extracellular portion of the chain corresponds to 205–223 (VPCGTVPGSKELPCGERYS). Residues 224-246 (VAFFCLDTACVMIFTVEYLLRLF) form a helical membrane-spanning segment. Residues 247–253 (AAPSRYR) lie on the Cytoplasmic side of the membrane. A helical membrane pass occupies residues 254 to 277 (FIRSVMSIIDVVAIMPYYIGLVMT). Over 278–283 (NNEDVS) the chain is Extracellular. A helical; Voltage-sensor transmembrane segment spans residues 284 to 306 (GAFVTLRVFRVFRIFKFSRHSQG). The Cytoplasmic portion of the chain corresponds to 307 to 318 (LRILGYTLKSCA). The helical transmembrane segment at 319–343 (SELGFLLFSLTMAIIIFATVMFYAE) threads the bilayer. Residues 344–352 (KGSSASKFT) are Extracellular-facing. The helical intramembrane region spans 353–366 (SIPASFWYTIVTMT). Positions 367, 368, 369, and 370 each coordinate K(+). A Selectivity filter motif is present at residues 367–372 (TLGYGD). An intramembrane segment occupies 367-374 (TLGYGDMV). The helical transmembrane segment at 378 to 400 (IAGKIFGSICSLSGVLVIALPVP) threads the bilayer. Residues 401-655 (VIVSNFSRIY…TSNVVKVSAL (255 aa)) are Cytoplasmic-facing. Threonine 459 is subject to Phosphothreonine. Residues 470-487 (SLIESQHHHLLHCLEKTT) form an interaction with KCNIP1 and KCNIP2 region. The mediates dendritic targeting stretch occupies residues 472-487 (IESQHHHLLHCLEKTT). Positions 523–565 (SSMQNYPSTRSPSLSSHSGLTTTCCSRRSKKTTHLPNSNLPAT) are disordered. The span at 529–548 (PSTRSPSLSSHSGLTTTCCS) shows a compositional bias: low complexity. Serine 569 and serine 585 each carry phosphoserine. The tract at residues 615–655 (ISIPTPPALTPEGESRPPPASPGPNTNIPSITSNVVKVSAL) is disordered. The span at 637-655 (GPNTNIPSITSNVVKVSAL) shows a compositional bias: polar residues.

This sequence belongs to the potassium channel family. D (Shal) (TC 1.A.1.2) subfamily. Kv4.3/KCND3 sub-subfamily. In terms of assembly, homotetramer. Heterotetramer with KCND2. Associates with the regulatory subunit KCNIP3. Associates with the regulatory subunit KCNIP4. Interacts with KCNE1, KCNE2, SCN1B and KCNAB1 and DLG1. Component of heteromultimeric potassium channels. Identified in potassium channel complexes containing KCND1, KCND2, KCND3, KCNIP1, KCNIP2, KCNIP3, KCNIP4, DPP6 and DPP10. Interacts with KCNIP1; each KCNIP1 monomer interacts with two adjacent KCND3 subunits, through both the N-terminal inactivation ball of a KCND3 subunit and a C-terminal helix from the adjacent KCND3 subunit, clamping them together; this interaction stabilizes the tetrameric form and modulates the channel gating kinetics namely channel activation and inactivation kinetics and rate of recovery from inactivation. Interacts with DPP6; this interaction modulates the channel gating kinetics namely channel activation and inactivation kinetics and rate of recovery from inactivation. Interacts with KCNIP2; each KCNIP2 monomer interacts with two adjacent KCND3 subunits, through both the N-terminal inactivation ball of a KCND3 subunit and a C-terminal helix from the adjacent KCND3 subunit, clamping them together; this interaction modulates the channel gating kinetics. In terms of processing, regulated through phosphorylation at Ser-569 by CaMK2D.

Its subcellular location is the cell membrane. It localises to the sarcolemma. The protein resides in the cell projection. It is found in the dendrite. It catalyses the reaction K(+)(in) = K(+)(out). Pore-forming (alpha) subunit of voltage-gated A-type potassium channels that mediates transmembrane potassium transport in excitable membranes, in brain and heart. In cardiomyocytes, may generate the transient outward potassium current I(To). In neurons, may conduct the transient subthreshold somatodendritic A-type potassium current (ISA). Kinetics properties are characterized by fast activation at subthreshold membrane potentials, rapid inactivation, and quick recovery from inactivation. Channel properties are modulated by interactions with regulatory subunits. Interaction with the regulatory subunits KCNIP1 or KCNIP2 modulates the channel gating kinetics namely channel activation and inactivation kinetics and rate of recovery from inactivation. Likewise, interaction with DPP6 modulates the channel gating kinetics namely channel activation and inactivation kinetics. The sequence is that of A-type voltage-gated potassium channel KCND3 from Mus musculus (Mouse).